Here is a 208-residue protein sequence, read N- to C-terminus: Small ribosomal subunit protein uS4 (208 aa).

The S4 RNA-binding domain occupies 99–165 (RRLDNVVFQL…PRLKEILSSL (67 aa)).

This sequence belongs to the universal ribosomal protein uS4 family. In terms of assembly, part of the 30S ribosomal subunit. Contacts protein S5. The interaction surface between S4 and S5 is involved in control of translational fidelity.

In terms of biological role, one of the primary rRNA binding proteins, it binds directly to 16S rRNA where it nucleates assembly of the body of the 30S subunit. Functionally, with S5 and S12 plays an important role in translational accuracy. This is Small ribosomal subunit protein uS4 from Desulfitobacterium hafniense (strain DSM 10664 / DCB-2).